A 514-amino-acid chain; its full sequence is 2,3-bisphosphoglycerate-independent phosphoglycerate mutase (514 aa).

Residues aspartate 14 and serine 64 each contribute to the Mn(2+) site. Serine 64 functions as the Phosphoserine intermediate in the catalytic mechanism. Substrate is bound by residues histidine 125, 155–156 (RD), arginine 187, arginine 193, 263–266 (RADR), and lysine 336. Mn(2+) is bound by residues aspartate 403, histidine 407, aspartate 444, histidine 445, and histidine 463.

This sequence belongs to the BPG-independent phosphoglycerate mutase family. In terms of assembly, monomer. Mn(2+) serves as cofactor.

It carries out the reaction (2R)-2-phosphoglycerate = (2R)-3-phosphoglycerate. It participates in carbohydrate degradation; glycolysis; pyruvate from D-glyceraldehyde 3-phosphate: step 3/5. Functionally, catalyzes the interconversion of 2-phosphoglycerate and 3-phosphoglycerate. The polypeptide is 2,3-bisphosphoglycerate-independent phosphoglycerate mutase (Shewanella sp. (strain MR-4)).